The chain runs to 882 residues: Homeobox-leucine zipper protein ROC3 (882 aa).

Positions 104-144 (DVDDDHKPQHSGHDQPPDAAQPSGAAGGNAKKKRYHRHTAH) are disordered. Positions 107–119 (DDHKPQHSGHDQP) are enriched in basic and acidic residues. Positions 133–143 (AKKKRYHRHTA) are enriched in basic residues. Positions 134–193 (KKKRYHRHTAHQIQQMEALFKECPHPDDKQRLKLSQELGLKPRQVKFWFQNRRTQMKAQQ) form a DNA-binding region, homeobox. Residues 200 to 263 (ILRAENENLK…LDRLACIATR (64 aa)) are a coiled coil. The region spanning 340–584 (QEQDKQLVVD…LQRQCERLAS (245 aa)) is the START domain. Over residues 782-816 (AAAPTISSSTTTTTGNGNGETSSTPPRNSSSNNNN) the composition is skewed to low complexity. Residues 782–820 (AAAPTISSSTTTTTGNGNGETSSTPPRNSSSNNNNADEL) are disordered.

Belongs to the HD-ZIP homeobox family. Class IV subfamily.

Its subcellular location is the nucleus. Probable transcription factor. This is Homeobox-leucine zipper protein ROC3 (ROC3) from Oryza sativa subsp. japonica (Rice).